Here is a 122-residue protein sequence, read N- to C-terminus: Ribosome-binding factor A (122 aa).

Belongs to the RbfA family. As to quaternary structure, monomer. Binds 30S ribosomal subunits, but not 50S ribosomal subunits or 70S ribosomes.

It localises to the cytoplasm. Its function is as follows. One of several proteins that assist in the late maturation steps of the functional core of the 30S ribosomal subunit. Associates with free 30S ribosomal subunits (but not with 30S subunits that are part of 70S ribosomes or polysomes). Required for efficient processing of 16S rRNA. May interact with the 5'-terminal helix region of 16S rRNA. This chain is Ribosome-binding factor A, found in Streptococcus agalactiae serotype III (strain NEM316).